Reading from the N-terminus, the 338-residue chain is MNILFWGTPAYAVPTLDALHGAGHTIVGVVTQPDRRRGRGKQLVPSPVKARAEELGLPVFTPERIRRDDDCKAKLAALGADASVVVAFGQILPKDVLEQPPLGSWNGHGSLLPRWRGAGPIQWALLEGDQETGVGIMAMEEGLDTGPVLLEQRTPIELLDTSIALAERLSALTAELMVQAMPLIEAAGTGPEDERLAKLNVRVQAEGSTYARMLEKQDFQLDWSASALSIHRKVMGLHPGAFTQLHDKRLKVLRTEPLIERLQDQLSTEGRSLVGQWPTGGHPPGTILAMIEDLGLVVSSSGCPLLIREAQLEGKARSTAPALLQQLKATLGDRFGEV.

110 to 113 (SLLP) lines the (6S)-5,6,7,8-tetrahydrofolate pocket.

The protein belongs to the Fmt family.

The enzyme catalyses L-methionyl-tRNA(fMet) + (6R)-10-formyltetrahydrofolate = N-formyl-L-methionyl-tRNA(fMet) + (6S)-5,6,7,8-tetrahydrofolate + H(+). Functionally, attaches a formyl group to the free amino group of methionyl-tRNA(fMet). The formyl group appears to play a dual role in the initiator identity of N-formylmethionyl-tRNA by promoting its recognition by IF2 and preventing the misappropriation of this tRNA by the elongation apparatus. This Synechococcus sp. (strain CC9605) protein is Methionyl-tRNA formyltransferase.